Here is a 353-residue protein sequence, read N- to C-terminus: Putative protein SPATA31J1 (353 aa).

Residues 34 to 54 form a helical membrane-spanning segment; it reads IPQIIHFVLFVVFSLVILIIL. Residues 122 to 271 are disordered; the sequence is EGSSHHLPRQ…NPGWVSWSDS (150 aa). Over residues 182 to 195 the composition is skewed to low complexity; sequence SVESLGSPSSLSSS. Positions 211–221 are enriched in polar residues; sequence PPASTLSPNPT. Low complexity predominate over residues 222–237; sequence SSTESLGYLSSLSSSQ. Basic residues predominate over residues 244–262; it reads PLKHPSHKPRGRSLPRRRN.

Belongs to the SPATA31 family.

Its subcellular location is the membrane. This is Putative protein SPATA31J1 from Homo sapiens (Human).